Reading from the N-terminus, the 594-residue chain is Probable pectinesterase/pectinesterase inhibitor 33 (594 aa).

An N-terminal signal peptide occupies residues 1–22 (MLRGIFHICLLASFLLLPFSSA). The disordered stretch occupies residues 28 to 75 (FTGGTDAPPPWDHNVSPPPETAPSPTPTSSPSTTSPPSPGPVAAPSPI). A compositionally biased stretch (pro residues) spans 34–71 (APPPWDHNVSPPPETAPSPTPTSSPSTTSPPSPGPVAA). N-linked (GlcNAc...) asparagine glycosylation is found at Asn77, Asn170, Asn213, and Asn226. Residues 78 to 237 (GSVSGDMTWW…SDLIGNCLAV (160 aa)) form a pectinesterase inhibitor 33 region. The pectinesterase 33 stretch occupies residues 280–581 (HLVVAQDRSG…TVGSLIAGGS (302 aa)). The substrate site is built by Thr356 and Gln386. Residue Asp409 is the Proton donor; for pectinesterase activity of the active site. A disulfide bond links Cys423 and Cys443. Residue Asp430 is the Nucleophile; for pectinesterase activity of the active site. Positions 498 and 500 each coordinate substrate.

It in the N-terminal section; belongs to the PMEI family. This sequence in the C-terminal section; belongs to the pectinesterase family. In terms of tissue distribution, expressed in siliques.

It is found in the secreted. The protein resides in the cell wall. The enzyme catalyses [(1-&gt;4)-alpha-D-galacturonosyl methyl ester](n) + n H2O = [(1-&gt;4)-alpha-D-galacturonosyl](n) + n methanol + n H(+). It functions in the pathway glycan metabolism; pectin degradation; 2-dehydro-3-deoxy-D-gluconate from pectin: step 1/5. In terms of biological role, acts in the modification of cell walls via demethylesterification of cell wall pectin. In Arabidopsis thaliana (Mouse-ear cress), this protein is Probable pectinesterase/pectinesterase inhibitor 33 (PME33).